The sequence spans 356 residues: Non-functional pseudokinase ZRK15 (356 aa).

The region spanning 62–356 is the Protein kinase domain; that stretch reads NRVSELFDEI…SSSSCGETSL (295 aa). ATP contacts are provided by residues 68-76 and Lys-94; that span reads FDEIPYDWY.

Belongs to the protein kinase superfamily. Ser/Thr protein kinase family. ZRK subfamily. Interacts with RPP13L4/ZAR1.

In Arabidopsis thaliana (Mouse-ear cress), this protein is Non-functional pseudokinase ZRK15.